We begin with the raw amino-acid sequence, 783 residues long: Cation/H(+) antiporter 2 (783 aa).

Helical transmembrane passes span 19–39 (LNTM…FYLL), 43–63 (CGQA…PVLL), 81–101 (YYSF…GLEV), 121–141 (FVVS…LFGI), 145–165 (YFTF…PVVV), 186–206 (ALFI…FISG), 208–228 (IILE…INMV), 242–262 (YLSK…GITI), 300–320 (EFVL…IALT), 323–343 (FYLG…IGVI), 355–375 (YWLF…LLLD), and 391–411 (MMVA…SFLL).

Belongs to the monovalent cation:proton antiporter 2 (CPA2) transporter (TC 2.A.37) family. CHX (TC 2.A.37.4) subfamily. As to expression, specifically expressed in pollen.

Its subcellular location is the membrane. Its function is as follows. May operate as a cation/H(+) antiporter. The protein is Cation/H(+) antiporter 2 (CHX2) of Arabidopsis thaliana (Mouse-ear cress).